The sequence spans 998 residues: Bifunctional glutamine synthetase adenylyltransferase/adenylyl-removing enzyme (998 aa).

Residues 1 to 487 (MVVTKPATQR…LHAKLFYQPL (487 aa)) are adenylyl removase. Residues 492 to 998 (GPAGLEIRHG…KAVVRKVFGS (507 aa)) form an adenylyl transferase region.

Belongs to the GlnE family. Mg(2+) serves as cofactor.

The catalysed reaction is [glutamine synthetase]-O(4)-(5'-adenylyl)-L-tyrosine + phosphate = [glutamine synthetase]-L-tyrosine + ADP. The enzyme catalyses [glutamine synthetase]-L-tyrosine + ATP = [glutamine synthetase]-O(4)-(5'-adenylyl)-L-tyrosine + diphosphate. Its function is as follows. Involved in the regulation of glutamine synthetase GlnA, a key enzyme in the process to assimilate ammonia. When cellular nitrogen levels are high, the C-terminal adenylyl transferase (AT) inactivates GlnA by covalent transfer of an adenylyl group from ATP to specific tyrosine residue of GlnA, thus reducing its activity. Conversely, when nitrogen levels are low, the N-terminal adenylyl removase (AR) activates GlnA by removing the adenylyl group by phosphorolysis, increasing its activity. The regulatory region of GlnE binds the signal transduction protein PII (GlnB) which indicates the nitrogen status of the cell. The sequence is that of Bifunctional glutamine synthetase adenylyltransferase/adenylyl-removing enzyme from Mycobacterium avium (strain 104).